The chain runs to 420 residues: PHO85 cyclin-6 (420 aa).

3 disordered regions span residues 1–82, 134–155, and 268–321; these read MSIK…ESSF, QGTHTVQSSTQEDKILDGDTSN, and VTTT…GVQR. The span at 7–22 shows a compositional bias: low complexity; the sequence is SPSSTNASSSPKSTYS. S61 carries the phosphoserine modification. Residues 134–143 are compositionally biased toward polar residues; that stretch reads QGTHTVQSST. The segment covering 277-296 has biased composition (basic and acidic residues); it reads AKHESPSNESSLDKANRGAD. A phosphoserine mark is found at S281 and S312. Acidic residues predominate over residues 307–316; the sequence is NENDDSDDEN. Phosphothreonine is present on T317.

This sequence belongs to the cyclin family. PHO80 subfamily. Forms a cyclin-CDK complex with PHO85. Interacts with the substrate protein YJL084C. Interacts with elongin-C, which stabilizes PCL6. Interacts with the CDK inhibitor (CKI) PHO81.

It localises to the cytoplasm. The protein resides in the nucleus. Cyclin partner of the cyclin-dependent kinase (CDK) PHO85. Together with cyclin PCL7, controls glycogen phosphorylase and glycogen synthase activities in response to nutrient availablility. The PCL6-PHO85 cyclin-CDK holoenzyme has GLC8 kinase activity and phosphorylates and inactivates the phosphatase PP1-2 inhibitor GLC8, causing activation of PP1-2, which then dephosphorylates and activates glycogen phosphorylase. PCL6-PHO85 also phosphorylates YJL084C. The chain is PHO85 cyclin-6 (PCL6) from Saccharomyces cerevisiae (strain ATCC 204508 / S288c) (Baker's yeast).